A 265-amino-acid chain; its full sequence is MMLNTLFLPIFLFFLITFDYVSTQTCFNGYFKPNGTYDLNRRRILSSLASKVTAHNGFYSSTIGQNPNQMFIISMCIPGTKPERCSDCIKGSTDGLLRSCPNQTVGYVWPDCCMVRYSNISFSGSLIMEPSQPVSDPAPIGVDLTLFDRIWDELMSRTITTASRTHGSLSFGHKYYAADVASLTTFQTIYTMVQCTPDVSSGDCEFCLKRTVLDYKKCCRGHIGGAFVRPFCFIRWDLYPFAGAFENITLPSPPPPLSLTPPVSN.

The N-terminal stretch at 1–23 is a signal peptide; it reads MMLNTLFLPIFLFFLITFDYVST. 2 consecutive Gnk2-homologous domains span residues 24–122 and 128–241; these read QTCF…NISF and MEPS…LYPF. 3 N-linked (GlcNAc...) asparagine glycosylation sites follow: Asn34, Asn102, and Asn119. Residue Asn247 is glycosylated (N-linked (GlcNAc...) asparagine).

Belongs to the protein kinase superfamily. Ser/Thr protein kinase family. CRK subfamily.

Its subcellular location is the secreted. The protein is Putative cysteine-rich receptor-like protein kinase At4g11521 of Arabidopsis thaliana (Mouse-ear cress).